Consider the following 390-residue polypeptide: Copper-containing nitrite reductase (390 aa).

The first 18 residues, 1 to 18, serve as a signal peptide directing secretion; sequence MKRQALAAMIASLFALAA. A lipid anchor (N-palmitoyl cysteine) is attached at Cys19. Cys19 is lipidated: S-diacylglycerol cysteine. The segment at 30 to 51 is disordered; that stretch reads ETPAAAAEAASSAAQTAAETPS. Plastocyanin-like domains follow at residues 101–195 and 245–346; these read WTFD…ILVE and GHVG…LKVE. Cu cation-binding residues include His134, His139, His174, Cys175, His183, and Met188. A substrate-binding site is contributed by His139. His280 contacts substrate. Residue His329 participates in Cu cation binding. The interval 367 to 390 is disordered; it reads GAAPAASAPAASAPAASASEKSVY. Residues 368-390 show a composition bias toward low complexity; that stretch reads AAPAASAPAASAPAASASEKSVY. Tandem repeats lie at residues 371-375, 376-380, and 381-385. Residues 371-385 are 3 X 5 AA tandem repeats of A-A-S-A-P; that stretch reads AASAPAASAPAASAS.

This sequence belongs to the multicopper oxidase family. In terms of assembly, homotrimer. Requires Cu(+) as cofactor. Cu(2+) is required as a cofactor.

It localises to the cell outer membrane. The enzyme catalyses nitric oxide + Fe(III)-[cytochrome c] + H2O = Fe(II)-[cytochrome c] + nitrite + 2 H(+). Its function is as follows. Catalyzes the reduction of nitrite to nitric oxide (NO). It could be essential for growth and survival in oxygen-depleted environments. The sequence is that of Copper-containing nitrite reductase (aniA) from Neisseria meningitidis serogroup B (strain ATCC BAA-335 / MC58).